The chain runs to 825 residues: Probable inorganic carbon transporter subunit DabA (825 aa).

Positions 334, 336, 521, and 536 each coordinate Zn(2+).

This sequence belongs to the inorganic carbon transporter (TC 9.A.2) DabA family. As to quaternary structure, forms a complex with DabB. Requires Zn(2+) as cofactor.

It is found in the cell inner membrane. Functionally, part of an energy-coupled inorganic carbon pump. This chain is Probable inorganic carbon transporter subunit DabA, found in Acidithiobacillus ferrooxidans (strain ATCC 53993 / BNL-5-31) (Leptospirillum ferrooxidans (ATCC 53993)).